The chain runs to 494 residues: UDP-N-acetylmuramoyl-L-alanyl-D-glutamate--2,6-diaminopimelate ligase (494 aa).

Ser32 is a binding site for UDP-N-acetyl-alpha-D-muramoyl-L-alanyl-D-glutamate. 112–118 lines the ATP pocket; that stretch reads GTNGKTT. UDP-N-acetyl-alpha-D-muramoyl-L-alanyl-D-glutamate-binding positions include Asn153, 154-155, Ser181, and Arg189; that span reads TT. Lys221 bears the N6-carboxylysine mark. Meso-2,6-diaminopimelate-binding positions include Arg383, 407 to 410, Gly459, and Glu463; that span reads DNPR. The short motif at 407–410 is the Meso-diaminopimelate recognition motif element; the sequence is DNPR.

The protein belongs to the MurCDEF family. MurE subfamily. It depends on Mg(2+) as a cofactor. Carboxylation is probably crucial for Mg(2+) binding and, consequently, for the gamma-phosphate positioning of ATP.

It localises to the cytoplasm. The catalysed reaction is UDP-N-acetyl-alpha-D-muramoyl-L-alanyl-D-glutamate + meso-2,6-diaminopimelate + ATP = UDP-N-acetyl-alpha-D-muramoyl-L-alanyl-gamma-D-glutamyl-meso-2,6-diaminopimelate + ADP + phosphate + H(+). The protein operates within cell wall biogenesis; peptidoglycan biosynthesis. In terms of biological role, catalyzes the addition of meso-diaminopimelic acid to the nucleotide precursor UDP-N-acetylmuramoyl-L-alanyl-D-glutamate (UMAG) in the biosynthesis of bacterial cell-wall peptidoglycan. The protein is UDP-N-acetylmuramoyl-L-alanyl-D-glutamate--2,6-diaminopimelate ligase of Solibacter usitatus (strain Ellin6076).